A 344-amino-acid chain; its full sequence is Glucan endo-1,3-beta-glucosidase (344 aa).

Residues 1 to 27 (MALTRNRPFVVVLLLGFVIMSTITIGA) form the signal peptide. The active-site Proton donor is the Glu123. Residue Glu268 is the Nucleophile of the active site.

It belongs to the glycosyl hydrolase 17 family.

It catalyses the reaction Hydrolysis of (1-&gt;3)-beta-D-glucosidic linkages in (1-&gt;3)-beta-D-glucans.. Functionally, implicated in the defense of plants against pathogens. The polypeptide is Glucan endo-1,3-beta-glucosidase (Vitis vinifera (Grape)).